The chain runs to 935 residues: Isoleucine--tRNA ligase (935 aa).

Positions 58–68 (PYANGSIHVGH) match the 'HIGH' region motif. An L-isoleucyl-5'-AMP-binding site is contributed by E558. Positions 599-603 (KMSKS) match the 'KMSKS' region motif. ATP is bound at residue K602. Zn(2+) contacts are provided by C897, C900, C917, and C920.

The protein belongs to the class-I aminoacyl-tRNA synthetase family. IleS type 1 subfamily. In terms of assembly, monomer. It depends on Zn(2+) as a cofactor.

Its subcellular location is the cytoplasm. It catalyses the reaction tRNA(Ile) + L-isoleucine + ATP = L-isoleucyl-tRNA(Ile) + AMP + diphosphate. Catalyzes the attachment of isoleucine to tRNA(Ile). As IleRS can inadvertently accommodate and process structurally similar amino acids such as valine, to avoid such errors it has two additional distinct tRNA(Ile)-dependent editing activities. One activity is designated as 'pretransfer' editing and involves the hydrolysis of activated Val-AMP. The other activity is designated 'posttransfer' editing and involves deacylation of mischarged Val-tRNA(Ile). The sequence is that of Isoleucine--tRNA ligase from Francisella tularensis subsp. holarctica (strain OSU18).